We begin with the raw amino-acid sequence, 674 residues long: Growth arrest-specific protein 6 (674 aa).

Residues methionine 1–threonine 27 form the signal peptide. A Gla domain is found at phenylalanine 50–glutamate 91. Cysteine 62 and cysteine 67 are disulfide-bonded. Serine 68 carries the phosphoserine modification. The region spanning leucine 113–aspartate 151 is the EGF-like 1; calcium-binding domain. 14 disulfides stabilise this stretch: cysteine 117/cysteine 130, cysteine 122/cysteine 139, cysteine 141/cysteine 150, cysteine 157/cysteine 168, cysteine 164/cysteine 177, cysteine 179/cysteine 192, cysteine 198/cysteine 209, cysteine 204/cysteine 218, cysteine 220/cysteine 233, cysteine 239/cysteine 248, cysteine 244/cysteine 257, cysteine 259/cysteine 274, cysteine 280/cysteine 566, and cysteine 441/cysteine 467. An EGF-like 2; calcium-binding domain is found at aspartate 153–glutamine 193. Residues aspartate 194–glutamine 234 enclose the EGF-like 3; calcium-binding domain. Residues aspartate 235–glutamate 275 form the EGF-like 4; calcium-binding domain. Laminin G-like domains lie at glycine 295 to cysteine 467 and glycine 474 to cysteine 666. The Ca(2+) site is built by aspartate 326 and glutamate 328. Asparagine 417 carries an N-linked (GlcNAc...) asparagine glycan. Arginine 437 is a Ca(2+) binding site. An N-linked (GlcNAc...) asparagine glycan is attached at asparagine 488. The residue at position 609 (threonine 609) is a Phosphothreonine. Residue serine 614 is modified to Phosphoserine. Phosphothreonine is present on residues threonine 617 and threonine 633. Tyrosine 636 bears the Phosphotyrosine mark. A disulfide bond links cysteine 639 and cysteine 666. Residue aspartate 652 coordinates Ca(2+).

In terms of assembly, heterodimer and heterotetramer with AXL. Gamma-carboxyglutamate residues are formed by vitamin K dependent carboxylation. These residues are essential for the binding of calcium.

It localises to the secreted. Ligand for tyrosine-protein kinase receptors AXL, TYRO3 and MER whose signaling is implicated in cell growth and survival, cell adhesion and cell migration. GAS6/AXL signaling plays a role in various processes such as endothelial cell survival during acidification by preventing apoptosis, optimal cytokine signaling during human natural killer cell development, hepatic regeneration, gonadotropin-releasing hormone neuron survival and migration, platelet activation, or regulation of thrombotic responses. The polypeptide is Growth arrest-specific protein 6 (Gas6) (Mus musculus (Mouse)).